We begin with the raw amino-acid sequence, 307 residues long: Ribosomal RNA small subunit methyltransferase H (307 aa).

S-adenosyl-L-methionine-binding positions include 33 to 35 (GGY), Asp-51, Phe-82, Asp-96, and Gln-103.

This sequence belongs to the methyltransferase superfamily. RsmH family.

The protein localises to the cytoplasm. It carries out the reaction cytidine(1402) in 16S rRNA + S-adenosyl-L-methionine = N(4)-methylcytidine(1402) in 16S rRNA + S-adenosyl-L-homocysteine + H(+). Its function is as follows. Specifically methylates the N4 position of cytidine in position 1402 (C1402) of 16S rRNA. In Rickettsia massiliae (strain Mtu5), this protein is Ribosomal RNA small subunit methyltransferase H.